Here is a 390-residue protein sequence, read N- to C-terminus: Nuclear receptor subfamily 2 group F member 6 (390 aa).

The segment covering 1–15 (MAMVTGGWGGPGGDT) has biased composition (gly residues). Residues 1–50 (MAMVTGGWGGPGGDTNGVDKAGGSYPRATEDDSASPPGATSDAEPGDEER) form a disordered region. A phosphoserine mark is found at Ser35 and Ser41. A DNA-binding region (nuclear receptor) is located at residues 54–129 (QVDCVVCGDK…VGMRKEAVQP (76 aa)). 2 consecutive NR C4-type zinc fingers follow at residues 57-77 (CVVCGDKSSGKHYGVFTCEGC) and 93-117 (CRSNRDCQIDQHHRNQCQYCRLKKC). The 224-residue stretch at 157–380 (PVSELIAQLL…TLIRDMLLSG (224 aa)) folds into the NR LBD domain. An important for dimerization region spans residues 314-390 (LQEKAQVALT…STFNWPYGSG (77 aa)).

Belongs to the nuclear hormone receptor family. NR2 subfamily. As to quaternary structure, binds DNA as dimer; homodimer and heterodimer with NR2F2 and probably NR2F1. Interacts with THRB.

It localises to the nucleus. Transcription factor predominantly involved in transcriptional repression. Binds to promoter/enhancer response elements that contain the imperfect 5'-AGGTCA-3' direct or inverted repeats with various spacings which are also recognized by other nuclear hormone receptors. Involved in modulation of hormonal responses. Represses transcriptional activity of the lutropin-choriogonadotropic hormone receptor/LHCGR gene, the renin/REN gene and the oxytocin-neurophysin/OXT gene. Represses the triiodothyronine-dependent and -independent transcriptional activity of the thyroid hormone receptor gene in a cell type-specific manner. The corepressing function towards thyroid hormone receptor beta/THRB involves at least in part the inhibition of THRB binding to triiodothyronine response elements (TREs) by NR2F6. Inhibits NFATC transcription factor DNA binding and subsequently its transcriptional activity. Acts as transcriptional repressor of IL-17 expression in Th-17 differentiated CD4(+) T cells and may be involved in induction and/or maintenance of peripheral immunological tolerance and autoimmunity. Involved in development of forebrain circadian clock; is required early in the development of the locus coeruleus (LC). This chain is Nuclear receptor subfamily 2 group F member 6 (Nr2f6), found in Rattus norvegicus (Rat).